The following is a 404-amino-acid chain: Serine/threonine transporter SstT (404 aa).

9 consecutive transmembrane segments (helical) span residues 17-37 (IGIG…VTAI), 44-64 (FVGA…VQAI), 75-95 (MTLI…VAVI), 138-158 (ALAT…GLAL), 179-199 (IVVW…FSTV), 212-232 (LLIL…NPLL), 287-307 (IPLG…VLTL), 319-339 (FLTA…ASGV), and 354-374 (FGIS…VGVI).

It belongs to the dicarboxylate/amino acid:cation symporter (DAACS) (TC 2.A.23) family.

Its subcellular location is the cell membrane. It carries out the reaction L-serine(in) + Na(+)(in) = L-serine(out) + Na(+)(out). It catalyses the reaction L-threonine(in) + Na(+)(in) = L-threonine(out) + Na(+)(out). Involved in the import of serine and threonine into the cell, with the concomitant import of sodium (symport system). This Streptococcus equi subsp. zooepidemicus (strain H70) protein is Serine/threonine transporter SstT.